The chain runs to 188 residues: Insulin-like peptide INSL6 (188 aa).

Positions 1–22 (MKQLCCSCLLWLGLLLAPFSQE) are cleaved as a signal peptide. 3 disulfides stabilise this stretch: C33-C169, C45-C182, and C168-C173. A propeptide spans 53–158 (FSMEEQSPMT…SGLFWGNHPQ (106 aa)) (connecting peptide).

Belongs to the insulin family. In terms of tissue distribution, testis and prostate specific.

It is found in the secreted. May have a role in sperm development and fertilization. This chain is Insulin-like peptide INSL6 (Insl6), found in Rattus norvegicus (Rat).